A 224-amino-acid polypeptide reads, in one-letter code: Thymidylate kinase (224 aa).

G13–S20 lines the ATP pocket.

It belongs to the thymidylate kinase family.

It carries out the reaction dTMP + ATP = dTDP + ADP. Phosphorylation of dTMP to form dTDP in both de novo and salvage pathways of dTTP synthesis. The chain is Thymidylate kinase from Agrobacterium fabrum (strain C58 / ATCC 33970) (Agrobacterium tumefaciens (strain C58)).